The following is a 411-amino-acid chain: LL-diaminopimelate aminotransferase (411 aa).

Residues tyrosine 15 and glycine 42 each coordinate substrate. Residues tyrosine 72, 108–109 (SK), tyrosine 132, asparagine 187, tyrosine 218, and 246–248 (SFS) contribute to the pyridoxal 5'-phosphate site. Positions 109, 132, and 187 each coordinate substrate. The residue at position 249 (lysine 249) is an N6-(pyridoxal phosphate)lysine. Residues arginine 257 and asparagine 292 each contribute to the pyridoxal 5'-phosphate site. Residues asparagine 292 and arginine 388 each coordinate substrate.

This sequence belongs to the class-I pyridoxal-phosphate-dependent aminotransferase family. LL-diaminopimelate aminotransferase subfamily. In terms of assembly, homodimer. The cofactor is pyridoxal 5'-phosphate.

The enzyme catalyses (2S,6S)-2,6-diaminopimelate + 2-oxoglutarate = (S)-2,3,4,5-tetrahydrodipicolinate + L-glutamate + H2O + H(+). Its pathway is amino-acid biosynthesis; L-lysine biosynthesis via DAP pathway; LL-2,6-diaminopimelate from (S)-tetrahydrodipicolinate (aminotransferase route): step 1/1. Functionally, involved in the synthesis of meso-diaminopimelate (m-DAP or DL-DAP), required for both lysine and peptidoglycan biosynthesis. Catalyzes the direct conversion of tetrahydrodipicolinate to LL-diaminopimelate. The protein is LL-diaminopimelate aminotransferase of Trichodesmium erythraeum (strain IMS101).